Consider the following 494-residue polypeptide: Glutamyl-tRNA(Gln) amidotransferase subunit A (494 aa).

Residues K81 and S156 each act as charge relay system in the active site. S180 (acyl-ester intermediate) is an active-site residue.

This sequence belongs to the amidase family. GatA subfamily. Heterotrimer of A, B and C subunits.

The catalysed reaction is L-glutamyl-tRNA(Gln) + L-glutamine + ATP + H2O = L-glutaminyl-tRNA(Gln) + L-glutamate + ADP + phosphate + H(+). Its function is as follows. Allows the formation of correctly charged Gln-tRNA(Gln) through the transamidation of misacylated Glu-tRNA(Gln) in organisms which lack glutaminyl-tRNA synthetase. The reaction takes place in the presence of glutamine and ATP through an activated gamma-phospho-Glu-tRNA(Gln). This chain is Glutamyl-tRNA(Gln) amidotransferase subunit A, found in Mycobacterium tuberculosis (strain ATCC 25177 / H37Ra).